A 943-amino-acid polypeptide reads, in one-letter code: Netrin receptor UNC5B-a (943 aa).

A signal peptide spans 1–30; that stretch reads MYLSRNPSGAALAAILVALILSCNFPSSTA. The Extracellular segment spans residues 31 to 380; that stretch reads GIEYSDVLPD…LESTGDVALY (350 aa). One can recognise an Ig-like domain in the interval 51-148; that stretch reads PHFLLEPEDA…AGTTKSKRSY (98 aa). Disulfide bonds link Cys-72–Cys-133, Cys-84–Cys-131, Cys-177–Cys-228, Cys-261–Cys-298, Cys-265–Cys-302, Cys-276–Cys-288, Cys-317–Cys-351, Cys-321–Cys-356, and Cys-329–Cys-341. Residues 150-245 enclose the Ig-like C2-type domain; that stretch reads RIAYLRKNFD…KRRSTTATVI (96 aa). The N-linked (GlcNAc...) asparagine glycan is linked to Asn-225. TSP type-1 domains follow at residues 249-303 and 305-357; these read NGGW…TMCP and DGGW…GLCM. Residue Asn-350 is glycosylated (N-linked (GlcNAc...) asparagine). Residues 381–401 form a helical membrane-spanning segment; it reads AGLVVAIFIVIILLMAVGIVV. Over 402–943 the chain is Cytoplasmic; that stretch reads YRRNCREFDT…MLVMATDGDC (542 aa). Residues 542 to 685 form the ZU5 domain; that stretch reads NSVTGTFGSL…LGTYAFVGES (144 aa). The segment at 688–836 is UPA domain; the sequence is RSAIKRLQLA…LEENVKSFDP (149 aa). The region spanning 863–941 is the Death domain; it reads KICNSLDAPN…EMMLVMATDG (79 aa).

Belongs to the unc-5 family. Interacts (via extracellular domain) with flrt3 (via extracellular domain). Interacts with rnd1. Post-translationally, phosphorylated on cytoplasmic tyrosine residues. In the developing visual system, it is expressed within the developing optic vesicles and later become restricted to the dorsal ciliary marginal zone, a site of retinoblast proliferation and differentiation.

It localises to the cell membrane. Functionally, plays a role in cell-cell adhesion during embryonic development. Receptor for netrin required for axon guidance. Mediates axon repulsion of neuronal growth cones in the developing nervous system upon ligand binding. This chain is Netrin receptor UNC5B-a (unc5b-a), found in Xenopus laevis (African clawed frog).